The chain runs to 273 residues: Shikimate dehydrogenase (NADP(+)) (273 aa).

Residues 18-20 (SKS) and threonine 65 each bind shikimate. The active-site Proton acceptor is lysine 69. Glutamate 81 is an NADP(+) binding site. Shikimate-binding residues include asparagine 90 and aspartate 105. Residues 130–134 (GAGGA), 154–159 (NRTHSK), and methionine 217 contribute to the NADP(+) site. Residue tyrosine 219 participates in shikimate binding. Position 240 (glycine 240) interacts with NADP(+).

This sequence belongs to the shikimate dehydrogenase family. In terms of assembly, homodimer.

The catalysed reaction is shikimate + NADP(+) = 3-dehydroshikimate + NADPH + H(+). It participates in metabolic intermediate biosynthesis; chorismate biosynthesis; chorismate from D-erythrose 4-phosphate and phosphoenolpyruvate: step 4/7. Involved in the biosynthesis of the chorismate, which leads to the biosynthesis of aromatic amino acids. Catalyzes the reversible NADPH linked reduction of 3-dehydroshikimate (DHSA) to yield shikimate (SA). The sequence is that of Shikimate dehydrogenase (NADP(+)) from Janthinobacterium sp. (strain Marseille) (Minibacterium massiliensis).